Here is a 283-residue protein sequence, read N- to C-terminus: Elongation factor Ts (283 aa).

The involved in Mg(2+) ion dislocation from EF-Tu stretch occupies residues 80–83 (TDFV).

Belongs to the EF-Ts family.

The protein resides in the cytoplasm. Associates with the EF-Tu.GDP complex and induces the exchange of GDP to GTP. It remains bound to the aminoacyl-tRNA.EF-Tu.GTP complex up to the GTP hydrolysis stage on the ribosome. In Histophilus somni (strain 129Pt) (Haemophilus somnus), this protein is Elongation factor Ts.